A 178-amino-acid chain; its full sequence is DELTA-miturgitoxin-Cp3a (178 aa).

The signal sequence occupies residues 1–18 (MKALYLLGLLAFLYSCSS). Positions 19-46 (ENVYDLQPESSEEENPGTFLEAIQEQSR) are excised as a propeptide. The short motif at 43 to 46 (EQSR) is the Processing quadruplet motif element. 8 disulfides stabilise this stretch: Cys48–Cys63, Cys55–Cys72, Cys62–Cys86, Cys74–Cys84, Cys113–Cys128, Cys120–Cys137, Cys127–Cys155, and Cys139–Cys153.

This sequence belongs to the spider toxin CSTX family. Double-CSTX subfamily. Cleavage of the propeptide depends on the processing quadruplet motif (XXXR, with at least one of X being E). Expressed by the venom gland.

Its subcellular location is the secreted. In terms of biological role, spider venom toxin that exhibits cytolytic activity by forming an alpha-helix across the membrane. Lethal to insect larvae. This chain is DELTA-miturgitoxin-Cp3a, found in Cheiracanthium punctorium (Yellow sac spider).